The chain runs to 362 residues: Chorismate synthase (362 aa).

Arg47 provides a ligand contact to NADP(+). Residues 124 to 126, Gly286, 301 to 305, and Arg327 each bind FMN; these read RSS and KPTAT.

The protein belongs to the chorismate synthase family. As to quaternary structure, homotetramer. Requires FMNH2 as cofactor.

The catalysed reaction is 5-O-(1-carboxyvinyl)-3-phosphoshikimate = chorismate + phosphate. It functions in the pathway metabolic intermediate biosynthesis; chorismate biosynthesis; chorismate from D-erythrose 4-phosphate and phosphoenolpyruvate: step 7/7. In terms of biological role, catalyzes the anti-1,4-elimination of the C-3 phosphate and the C-6 proR hydrogen from 5-enolpyruvylshikimate-3-phosphate (EPSP) to yield chorismate, which is the branch point compound that serves as the starting substrate for the three terminal pathways of aromatic amino acid biosynthesis. This reaction introduces a second double bond into the aromatic ring system. The sequence is that of Chorismate synthase from Synechococcus sp. (strain ATCC 27144 / PCC 6301 / SAUG 1402/1) (Anacystis nidulans).